A 603-amino-acid chain; its full sequence is Elongation factor 4 (603 aa).

The tr-type G domain occupies 7 to 189; that stretch reads KKIRNFCIIA…SVVKNVPPPE (183 aa). GTP contacts are provided by residues 19–24 and 136–139; these read DHGKST and NKID.

It belongs to the TRAFAC class translation factor GTPase superfamily. Classic translation factor GTPase family. LepA subfamily.

The protein resides in the cell membrane. It carries out the reaction GTP + H2O = GDP + phosphate + H(+). In terms of biological role, required for accurate and efficient protein synthesis under certain stress conditions. May act as a fidelity factor of the translation reaction, by catalyzing a one-codon backward translocation of tRNAs on improperly translocated ribosomes. Back-translocation proceeds from a post-translocation (POST) complex to a pre-translocation (PRE) complex, thus giving elongation factor G a second chance to translocate the tRNAs correctly. Binds to ribosomes in a GTP-dependent manner. The protein is Elongation factor 4 of Acetivibrio thermocellus (strain ATCC 27405 / DSM 1237 / JCM 9322 / NBRC 103400 / NCIMB 10682 / NRRL B-4536 / VPI 7372) (Clostridium thermocellum).